Consider the following 228-residue polypeptide: MREGKRGPPCILSFRGTLERVEAQWELEAQGPGQCPAPLGDPASTTDGAQEARVPLDGAFWIPRPPAGSPKGCFACVSKPPALQAPAAPAPEPSASPPMAPTLFPMESKSSKTDSVRAAGAPPACKHLAEKKTMTNPTTVIEVYPDTTEVNDYYLWSIFNFVYLNFCCLGFIALAYSLKVRDKKLLNDLNGAVEDAKTARLFNITSSALAASCIILVFIFLRYPLTDY.

The Extracellular segment spans residues 1-154 (MREGKRGPPC…PDTTEVNDYY (154 aa)). The disordered stretch occupies residues 29–49 (AQGPGQCPAPLGDPASTTDGA). Residues 155–175 (LWSIFNFVYLNFCCLGFIALA) traverse the membrane as a helical segment. 2 S-palmitoyl cysteine lipidation sites follow: cysteine 167 and cysteine 168. At 176–200 (YSLKVRDKKLLNDLNGAVEDAKTAR) the chain is on the cytoplasmic side. The helical transmembrane segment at 201-221 (LFNITSSALAASCIILVFIFL) threads the bilayer. Residues 222-228 (RYPLTDY) are Extracellular-facing.

Belongs to the CD225/Dispanin family.

It localises to the cell membrane. This chain is Interferon-induced transmembrane protein 10 (IFITM10), found in Homo sapiens (Human).